A 69-amino-acid chain; its full sequence is DNA-directed RNA polymerase subunit epsilon (69 aa).

It belongs to the RNA polymerase subunit epsilon family. RNAP is composed of a core of 2 alpha, a beta and a beta' subunit. The core is associated with a delta subunit, and at least one of epsilon or omega. When a sigma factor is associated with the core the holoenzyme is formed, which can initiate transcription.

The catalysed reaction is RNA(n) + a ribonucleoside 5'-triphosphate = RNA(n+1) + diphosphate. A non-essential component of RNA polymerase (RNAP). This chain is DNA-directed RNA polymerase subunit epsilon, found in Lysinibacillus sphaericus (strain C3-41).